A 177-amino-acid polypeptide reads, in one-letter code: Protein CutA 1, chloroplastic (177 aa).

A chloroplast-targeting transit peptide spans 1 to 60 (MPLLPSPLGSLSAAATAAPRRAAAAAGLSPLLLRRRAPIAGALLFLSLGAFAGVRSLSSS).

Belongs to the CutA family. As to quaternary structure, homotrimer.

The protein localises to the plastid. The protein resides in the chloroplast. The sequence is that of Protein CutA 1, chloroplastic (CUTA1) from Oryza sativa subsp. japonica (Rice).